An 882-amino-acid polypeptide reads, in one-letter code: Serine/threonine-protein kinase greatwall (882 aa).

Met1 carries the N-acetylmethionine modification. The region spanning 35 to 838 (FTIVKPISRG…MKELKRHHLF (804 aa)) is the Protein kinase domain. ATP-binding positions include 41–49 (ISRGAFGKV) and Lys62. Asp156 serves as the catalytic Proton acceptor. Phosphothreonine is present on residues Thr207 and Thr222. Phosphoserine occurs at positions 293, 371, and 454. Thr521 is subject to Phosphothreonine. Phosphoserine is present on residues Ser554, Ser558, Ser633, Ser660, and Ser671. The segment at 713-736 (TPNQVKSGTPYRTPKSVRRGAAPV) is disordered. Thr725 is modified (phosphothreonine). Position 728 is a phosphoserine (Ser728). Phosphothreonine; by CDK1 is present on Thr744. Residues 839–882 (SDVDWENLQHQTMPFIPQPDDETDTSYFEARNNAQHLTISGFSL) form the AGC-kinase C-terminal domain. 2 positions are modified to phosphoserine: Ser878 and Ser881.

Belongs to the protein kinase superfamily. AGC Ser/Thr protein kinase family. Post-translationally, phosphorylation at Thr-744 by CDK1 during M phase activates its kinase activity. Maximum phosphorylation occurs in prometaphase.

Its subcellular location is the cytoplasm. It localises to the cytoskeleton. The protein localises to the microtubule organizing center. It is found in the centrosome. The protein resides in the nucleus. It catalyses the reaction L-seryl-[protein] + ATP = O-phospho-L-seryl-[protein] + ADP + H(+). It carries out the reaction L-threonyl-[protein] + ATP = O-phospho-L-threonyl-[protein] + ADP + H(+). Its function is as follows. Serine/threonine kinase that plays a key role in M phase by acting as a regulator of mitosis entry and maintenance. Acts by promoting the inactivation of protein phosphatase 2A (PP2A) during M phase: does not directly inhibit PP2A but acts by mediating phosphorylation and subsequent activation of ARPP19 and ENSA at 'Ser-62' and 'Ser-67', respectively. ARPP19 and ENSA are phosphatase inhibitors that specifically inhibit the PPP2R2D (PR55-delta) subunit of PP2A. Inactivation of PP2A during M phase is essential to keep cyclin-B1-CDK1 activity high. Following DNA damage, it is also involved in checkpoint recovery by being inhibited. The protein is Serine/threonine-protein kinase greatwall (MASTL) of Ailuropoda melanoleuca (Giant panda).